Here is a 331-residue protein sequence, read N- to C-terminus: Ketol-acid reductoisomerase (NADP(+)) (331 aa).

Residues 2–182 (ARMYYDEDGN…GGTRAGILET (181 aa)) enclose the KARI N-terminal Rossmann domain. NADP(+) is bound by residues 25 to 28 (YGSQ), serine 51, serine 53, and 83 to 86 (DEVQ). Residue histidine 108 is part of the active site. Position 134 (glycine 134) interacts with NADP(+). Residues 183-328 (SFREETETDL…KDLRAMFSWL (146 aa)) enclose the KARI C-terminal knotted domain. The Mg(2+) site is built by aspartate 191, glutamate 195, glutamate 227, and glutamate 231. Serine 252 is a binding site for substrate.

It belongs to the ketol-acid reductoisomerase family. Requires Mg(2+) as cofactor.

The enzyme catalyses (2R)-2,3-dihydroxy-3-methylbutanoate + NADP(+) = (2S)-2-acetolactate + NADPH + H(+). It catalyses the reaction (2R,3R)-2,3-dihydroxy-3-methylpentanoate + NADP(+) = (S)-2-ethyl-2-hydroxy-3-oxobutanoate + NADPH + H(+). It functions in the pathway amino-acid biosynthesis; L-isoleucine biosynthesis; L-isoleucine from 2-oxobutanoate: step 2/4. It participates in amino-acid biosynthesis; L-valine biosynthesis; L-valine from pyruvate: step 2/4. In terms of biological role, involved in the biosynthesis of branched-chain amino acids (BCAA). Catalyzes an alkyl-migration followed by a ketol-acid reduction of (S)-2-acetolactate (S2AL) to yield (R)-2,3-dihydroxy-isovalerate. In the isomerase reaction, S2AL is rearranged via a Mg-dependent methyl migration to produce 3-hydroxy-3-methyl-2-ketobutyrate (HMKB). In the reductase reaction, this 2-ketoacid undergoes a metal-dependent reduction by NADPH to yield (R)-2,3-dihydroxy-isovalerate. This Gloeothece citriformis (strain PCC 7424) (Cyanothece sp. (strain PCC 7424)) protein is Ketol-acid reductoisomerase (NADP(+)).